The chain runs to 865 residues: Xylosyltransferase 2 (865 aa).

Topologically, residues 1 to 15 are cytoplasmic; that stretch reads MVASARVQKLVRRYK. The helical; Signal-anchor for type II membrane protein transmembrane segment at 16–36 threads the bilayer; it reads LAIATALAILLLQGLVVWSFS. Topologically, residues 37–865 are lumenal; sequence GLEEDEPGEK…GPVKADGRLR (829 aa). A disordered region spans residues 39–157; sequence EEDEPGEKGR…EGAPQPTDNG (119 aa). The segment covering 53–65 has biased composition (basic and acidic residues); the sequence is RPLDPGEGSKDTD. A compositionally biased stretch (basic residues) spans 73-82; sequence SAGRRHGRWR. The N-linked (GlcNAc...) asparagine glycan is linked to Asn-122. Residues 125–137 show a composition bias toward low complexity; it reads GAAAGEALVGAAG. 4 disulfides stabilise this stretch: Cys-162–Cys-190, Cys-206–Cys-448, Cys-467–Cys-480, and Cys-469–Cys-478. Residues Val-239, Asp-267, and 296–298 each bind UDP-alpha-D-xylose; that span reads TIW. N-linked (GlcNAc...) asparagine glycosylation occurs at Asn-327. Residue 400–401 participates in UDP-alpha-D-xylose binding; that stretch reads DW. Residues Ser-481 and 504 to 505 each bind UDP-alpha-D-xylose; that span reads RK. 2 disulfide bridges follow: Cys-581–Cys-833 and Cys-826–Cys-839. Asn-683 is a glycosylation site (N-linked (GlcNAc...) asparagine).

The protein belongs to the glycosyltransferase 14 family. XylT subfamily. In terms of assembly, monomer. It depends on Mg(2+) as a cofactor. Requires Mn(2+) as cofactor. Post-translationally, contains disulfide bonds.

It localises to the golgi apparatus membrane. Its subcellular location is the secreted. It carries out the reaction UDP-alpha-D-xylose + L-seryl-[protein] = 3-O-(beta-D-xylosyl)-L-seryl-[protein] + UDP + H(+). The protein operates within glycan metabolism; chondroitin sulfate biosynthesis. It functions in the pathway glycan metabolism; heparan sulfate biosynthesis. Its function is as follows. Catalyzes the first step in the biosynthesis of chondroitin sulfate, heparan sulfate and dermatan sulfate proteoglycans, such as DCN. Transfers D-xylose from UDP-D-xylose to specific serine residues of the core protein. The chain is Xylosyltransferase 2 (XYLT2) from Canis lupus familiaris (Dog).